A 386-amino-acid polypeptide reads, in one-letter code: Paralemmin-1 (386 aa).

Positions 4-115 (VEANTLQQER…TKENLAEAAA (112 aa)) form a coiled coil. Disordered stretches follow at residues 21–40 (RKRQTEIENKRRQLEDDRRQ), 51–149 (ERWL…PMKA), 240–290 (EATA…TMIF), and 321–378 (DAES…AKKQ). Basic and acidic residues-rich tracts occupy residues 24 to 40 (QTEIENKRRQLEDDRRQ) and 68 to 95 (AMKKQMQEDEVKTKELEETIQRLERELE). A compositionally biased stretch (low complexity) spans 97–116 (LENSSSVTSTKENLAEAAAP). Composition is skewed to basic and acidic residues over residues 259–282 (PRREITGLQAKPRENSTEGAEPSR), 322–334 (AESKAEPEGKDHA), and 365–377 (EAKEAEPDMDAKK). 2 S-palmitoyl cysteine lipidation sites follow: Cys380 and Cys382. Residue Cys383 is modified to Cysteine methyl ester. Cys383 carries the S-farnesyl cysteine lipid modification. Positions 384-386 (TVM) are cleaved as a propeptide — removed in mature form.

It belongs to the paralemmin family. In terms of assembly, interacts with dopamine receptor DRD3. Post-translationally, phosphorylated. As to expression, expressed in the lens (at protein level). Highly expressed in forebrain and cerebellum with lower expression in adrenal gland and heart. Expression weak or undetectable in other tissues.

The protein resides in the cell membrane. The protein localises to the cell projection. It localises to the filopodium membrane. Its subcellular location is the axon. It is found in the dendrite. The protein resides in the dendritic spine. The protein localises to the basolateral cell membrane. It localises to the apicolateral cell membrane. Involved in plasma membrane dynamics and cell process formation. Isoform 1 and isoform 2 are necessary for axonal and dendritic filopodia induction, for dendritic spine maturation and synapse formation in a palmitoylation-dependent manner. This is Paralemmin-1 (PALM) from Gallus gallus (Chicken).